The following is a 465-amino-acid chain: 3-isopropylmalate dehydratase large subunit (465 aa).

The [4Fe-4S] cluster site is built by cysteine 347, cysteine 407, and cysteine 410. A disordered region spans residues 417–443 (TLKPGERSASTSNRNFEGRQGKGGRTH).

The protein belongs to the aconitase/IPM isomerase family. LeuC type 1 subfamily. As to quaternary structure, heterodimer of LeuC and LeuD. It depends on [4Fe-4S] cluster as a cofactor.

The catalysed reaction is (2R,3S)-3-isopropylmalate = (2S)-2-isopropylmalate. It functions in the pathway amino-acid biosynthesis; L-leucine biosynthesis; L-leucine from 3-methyl-2-oxobutanoate: step 2/4. Its function is as follows. Catalyzes the isomerization between 2-isopropylmalate and 3-isopropylmalate, via the formation of 2-isopropylmaleate. The sequence is that of 3-isopropylmalate dehydratase large subunit from Thermobifida fusca (strain YX).